The sequence spans 487 residues: MLHAVETAFYQKHVLVVGDLMLDRYLWGDVTRISPEAPVPVVHMQRESHRCGGAANVASNLAKLGLHTSIVGFVGEDSDGQVLISALQESGIDTHGILPLAGWSTITKTRVIGGHQQILRMDRETPLADTAHASQLLHQQVMPMLEGEQRPHVIILSDYAKGVLSFELCQALIVRARNLGIPVLVDPKGRDYARYRHATALSPNRGELRGVTGVEDGDLNTLLDAGESLRQSLDVAFLAVTLSEQGIALVDGSEHPRRIPAMAQEVYDVSGAGDTVIATLGAGLAAGLTRLDALHLANLAAGVVVGKLGTAAIDLNELRGALLTDATYEQSDKIANWAHAKQQIARWHAQGEKVVFTNGCFDLLHAGHVTYLEHARRLGQRLVLGLNTDASVSRLKGPERPLIQEQDRARVLAALAAVDLVVLFEQDTPLELIEQLRPDILAKGADYREDQVVGGDLVRRWGGRVALVQLVQGRSTTGIVQRISAQK.

The segment at 1–329 (MLHAVETAFY…GALLTDATYE (329 aa)) is ribokinase. Residue 204-207 (NRGE) participates in ATP binding. Aspartate 274 is an active-site residue. The cytidylyltransferase stretch occupies residues 356 to 487 (FTNGCFDLLH…GIVQRISAQK (132 aa)).

This sequence in the N-terminal section; belongs to the carbohydrate kinase PfkB family. It in the C-terminal section; belongs to the cytidylyltransferase family. As to quaternary structure, homodimer.

The enzyme catalyses D-glycero-beta-D-manno-heptose 7-phosphate + ATP = D-glycero-beta-D-manno-heptose 1,7-bisphosphate + ADP + H(+). It carries out the reaction D-glycero-beta-D-manno-heptose 1-phosphate + ATP + H(+) = ADP-D-glycero-beta-D-manno-heptose + diphosphate. The protein operates within nucleotide-sugar biosynthesis; ADP-L-glycero-beta-D-manno-heptose biosynthesis; ADP-L-glycero-beta-D-manno-heptose from D-glycero-beta-D-manno-heptose 7-phosphate: step 1/4. It functions in the pathway nucleotide-sugar biosynthesis; ADP-L-glycero-beta-D-manno-heptose biosynthesis; ADP-L-glycero-beta-D-manno-heptose from D-glycero-beta-D-manno-heptose 7-phosphate: step 3/4. In terms of biological role, catalyzes the phosphorylation of D-glycero-D-manno-heptose 7-phosphate at the C-1 position to selectively form D-glycero-beta-D-manno-heptose-1,7-bisphosphate. Catalyzes the ADP transfer from ATP to D-glycero-beta-D-manno-heptose 1-phosphate, yielding ADP-D-glycero-beta-D-manno-heptose. This Magnetococcus marinus (strain ATCC BAA-1437 / JCM 17883 / MC-1) protein is Bifunctional protein HldE.